A 667-amino-acid polypeptide reads, in one-letter code: UvrABC system protein B (667 aa).

The Helicase ATP-binding domain maps to 31–414; it reads AGIESGEKEQ…EMDRTKHVVQ (384 aa). 44 to 51 contacts ATP; sequence GATGTGKT. The Beta-hairpin motif lies at 97 to 120; that stretch reads YYDYYQPEAYVPSSDTYIEKDSAI. A Helicase C-terminal domain is found at 435–597; sequence QIDDLVGEIN…ITPHTIKKAI (163 aa). Residues 630-665 enclose the UVR domain; that stretch reads LDMISKLEEQMKTAAKKLDFEQAATLRDTVMELKAQ.

The protein belongs to the UvrB family. As to quaternary structure, forms a heterotetramer with UvrA during the search for lesions. Interacts with UvrC in an incision complex.

The protein resides in the cytoplasm. Its function is as follows. The UvrABC repair system catalyzes the recognition and processing of DNA lesions. A damage recognition complex composed of 2 UvrA and 2 UvrB subunits scans DNA for abnormalities. Upon binding of the UvrA(2)B(2) complex to a putative damaged site, the DNA wraps around one UvrB monomer. DNA wrap is dependent on ATP binding by UvrB and probably causes local melting of the DNA helix, facilitating insertion of UvrB beta-hairpin between the DNA strands. Then UvrB probes one DNA strand for the presence of a lesion. If a lesion is found the UvrA subunits dissociate and the UvrB-DNA preincision complex is formed. This complex is subsequently bound by UvrC and the second UvrB is released. If no lesion is found, the DNA wraps around the other UvrB subunit that will check the other stand for damage. This chain is UvrABC system protein B, found in Lactiplantibacillus plantarum (strain ATCC BAA-793 / NCIMB 8826 / WCFS1) (Lactobacillus plantarum).